A 178-amino-acid polypeptide reads, in one-letter code: ATP synthase subunit delta (178 aa).

Belongs to the ATPase delta chain family. In terms of assembly, F-type ATPases have 2 components, F(1) - the catalytic core - and F(0) - the membrane proton channel. F(1) has five subunits: alpha(3), beta(3), gamma(1), delta(1), epsilon(1). F(0) has three main subunits: a(1), b(2) and c(10-14). The alpha and beta chains form an alternating ring which encloses part of the gamma chain. F(1) is attached to F(0) by a central stalk formed by the gamma and epsilon chains, while a peripheral stalk is formed by the delta and b chains.

It is found in the cell membrane. Its function is as follows. F(1)F(0) ATP synthase produces ATP from ADP in the presence of a proton or sodium gradient. F-type ATPases consist of two structural domains, F(1) containing the extramembraneous catalytic core and F(0) containing the membrane proton channel, linked together by a central stalk and a peripheral stalk. During catalysis, ATP synthesis in the catalytic domain of F(1) is coupled via a rotary mechanism of the central stalk subunits to proton translocation. This protein is part of the stalk that links CF(0) to CF(1). It either transmits conformational changes from CF(0) to CF(1) or is implicated in proton conduction. In Streptococcus agalactiae serotype Ia (strain ATCC 27591 / A909 / CDC SS700), this protein is ATP synthase subunit delta.